The sequence spans 204 residues: Large ribosomal subunit protein bL25 (204 aa).

The protein belongs to the bacterial ribosomal protein bL25 family. CTC subfamily. In terms of assembly, part of the 50S ribosomal subunit; part of the 5S rRNA/L5/L18/L25 subcomplex. Contacts the 5S rRNA. Binds to the 5S rRNA independently of L5 and L18.

In terms of biological role, this is one of the proteins that binds to the 5S RNA in the ribosome where it forms part of the central protuberance. This chain is Large ribosomal subunit protein bL25, found in Rhizobium etli (strain ATCC 51251 / DSM 11541 / JCM 21823 / NBRC 15573 / CFN 42).